We begin with the raw amino-acid sequence, 364 residues long: Chorismate synthase (364 aa).

R47 contacts NADP(+). FMN-binding positions include 124–126, G287, 302–306, and R328; these read RAS and KPTAT.

The protein belongs to the chorismate synthase family. As to quaternary structure, homotetramer. FMNH2 is required as a cofactor.

The enzyme catalyses 5-O-(1-carboxyvinyl)-3-phosphoshikimate = chorismate + phosphate. Its pathway is metabolic intermediate biosynthesis; chorismate biosynthesis; chorismate from D-erythrose 4-phosphate and phosphoenolpyruvate: step 7/7. Functionally, catalyzes the anti-1,4-elimination of the C-3 phosphate and the C-6 proR hydrogen from 5-enolpyruvylshikimate-3-phosphate (EPSP) to yield chorismate, which is the branch point compound that serves as the starting substrate for the three terminal pathways of aromatic amino acid biosynthesis. This reaction introduces a second double bond into the aromatic ring system. The protein is Chorismate synthase of Prochlorococcus marinus subsp. pastoris (strain CCMP1986 / NIES-2087 / MED4).